Consider the following 101-residue polypeptide: Putative pterin-4-alpha-carbinolamine dehydratase (101 aa).

The protein belongs to the pterin-4-alpha-carbinolamine dehydratase family.

It carries out the reaction (4aS,6R)-4a-hydroxy-L-erythro-5,6,7,8-tetrahydrobiopterin = (6R)-L-erythro-6,7-dihydrobiopterin + H2O. In Nitrobacter winogradskyi (strain ATCC 25391 / DSM 10237 / CIP 104748 / NCIMB 11846 / Nb-255), this protein is Putative pterin-4-alpha-carbinolamine dehydratase.